Consider the following 435-residue polypeptide: Trigger factor (435 aa).

Residues Gly-161–Pro-246 form the PPIase FKBP-type domain.

The protein belongs to the FKBP-type PPIase family. Tig subfamily.

Its subcellular location is the cytoplasm. It carries out the reaction [protein]-peptidylproline (omega=180) = [protein]-peptidylproline (omega=0). Functionally, involved in protein export. Acts as a chaperone by maintaining the newly synthesized protein in an open conformation. Functions as a peptidyl-prolyl cis-trans isomerase. In Colwellia psychrerythraea (strain 34H / ATCC BAA-681) (Vibrio psychroerythus), this protein is Trigger factor.